The following is a 325-amino-acid chain: MTNQSLPKLTYTGASKSAVPIISESELQTVTAEPWLKISDEGLQLEGLVFDRDHNLFLCEVFGGKIFKVDIDTKKVSTAFQSTKQNPAAVKIHKDGRLFTCYLGDFESTGGIFATDEHGEQFEEIISELNTEYCIDDMVFDSKGGFYFTDFRGYSTNPKGGVYYVSPDFKTVTPVIQNISVANGVALSTDEKILWVTETTTNRLHRIQLEDDGVTIAPFGATIPYYFTGHEGPDSVCIDSDDNLYVAMYGQGRVLVFNKRGYPIGQILMPGRDEGKMLRSTHPQFIPGTNQLLICTNDIENDSEGGSMIYTVEAFAKGHESYQFQ.

Ca(2+) is bound by residues Glu46, Ser108, Gly110, Glu128, Thr131, Tyr133, Asp136, Asn183, Asp234, and Ser235. Catalysis depends on Asp234, which acts as the Proton donor.

The protein belongs to the SMP-30/CGR1 family. Ca(2+) serves as cofactor.

It is found in the cytoplasm. In terms of biological role, exhibits lactonase activity. Acts in cells with perturbed membrane integrity and is possibly related to the membrane homeostasis. This Staphylococcus haemolyticus (strain JCSC1435) protein is Lactonase drp35 (drp35).